The sequence spans 529 residues: Ribonuclease Y (529 aa).

The helical transmembrane segment at 4-24 threads the bilayer; it reads GLIYISLEVLVACLITALVMY. One can recognise a KH domain in the interval 216–297; sequence LTTRIALPCS…NRIEEVYHRV (82 aa). One can recognise an HD domain in the interval 342-435; sequence ALQHSKEVAL…VCAADALSAG (94 aa).

It belongs to the RNase Y family.

It localises to the cell membrane. In terms of biological role, endoribonuclease that initiates mRNA decay. This chain is Ribonuclease Y, found in Helicobacter pylori (strain ATCC 700392 / 26695) (Campylobacter pylori).